Reading from the N-terminus, the 205-residue chain is Nuclear transcription factor Y subunit C-6 (205 aa).

Residues 1–24 form a disordered region; the sequence is MEPKSTTPPPPPPPPVLGAPVPYP.

It belongs to the NFYC/HAP5 subunit family. In terms of assembly, heterotrimeric transcription factor composed of three components, NF-YA, NF-YB and NF-YC. NF-YB and NF-YC must interact and dimerize for NF-YA association and DNA binding. Interacts with NFYB2. Interacts with NFYB8, NFYB10 and HD5/NFYB11.

It localises to the nucleus. Its subcellular location is the cytoplasm. Component of the NF-Y/HAP transcription factor complex. This is Nuclear transcription factor Y subunit C-6 from Oryza sativa subsp. japonica (Rice).